Reading from the N-terminus, the 2769-residue chain is Thyroglobulin (2769 aa).

The first 19 residues, 1 to 19 (MALALWVFGLLDLICLASA), serve as a signal peptide directing secretion. Y24 is subject to Iodotyrosine; alternate. The residue at position 24 (Y24) is a Sulfotyrosine; alternate. Position 24 is a thyroxine; alternate (Y24). Y24 bears the Triiodothyronine; alternate mark. 4 Thyroglobulin type-1 domains span residues 31–92 (LRPC…PAAC), 93–160 (LSFC…PARC), 161–297 (PRSC…RFRC), and 298–358 (PTKC…PPSC). Cystine bridges form between C34/C52, C63/C70, C72/C92, C96/C120, C131/C138, C140/C160, C164/C183, and C194/C235. Iodotyrosine is present on Y108. N110 carries N-linked (GlcNAc...) (complex) asparagine; alternate glycosylation. An N-linked (GlcNAc...) (hybrid) asparagine; alternate glycan is attached at N110. At Y149 the chain carries Iodotyrosine; alternate. Y149 carries the diiodotyrosine; alternate modification. 2 positions are modified to iodotyrosine: Y234 and Y258. Intrachain disulfides connect C301–C319, C330–C336, C338–C358, C364–C619, C408–C607, C630–C635, C637–C657, C661–C686, and C697–C702. N483 and N495 each carry an N-linked (GlcNAc...) (complex) asparagine; alternate glycan. 2 N-linked (GlcNAc...) (hybrid) asparagine; alternate glycosylation sites follow: N483 and N495. Thyroglobulin type-1 domains lie at 604 to 657 (SQGC…RPRC), 658 to 725 (PTEC…PKKC), 726 to 921 (PSPC…VPAC), 922 to 1073 (PGSC…IPQC), 1074 to 1145 (PTSC…SAQC), and 1146 to 1210 (PSLC…QPAC). An Iodotyrosine; alternate modification is found at Y703. Position 703 is a thyroxine; alternate (Y703). Y703 is modified (triiodothyronine; alternate). Y703 bears the Diiodotyrosine; alternate mark. 16 disulfide bridges follow: C704-C725, C729-C762, C773-C898, C900-C921, C925-C1031, C1042-C1049, C1051-C1073, C1077-C1108, C1126-C1145, C1149-C1169, C1181-C1188, C1190-C1210, C1215-C1264, C1231-C1245, C1306-C1356, and C1331-C1347. At Y784 the chain carries Iodotyrosine. N853 carries N-linked (GlcNAc...) (complex) asparagine; alternate glycosylation. N853 carries N-linked (GlcNAc...) (hybrid) asparagine; alternate glycosylation. At Y866 the chain carries Iodotyrosine; alternate. Y866 carries the post-translational modification Diiodotyrosine; alternate. Diiodotyrosine is present on Y883. A glycan (N-linked (GlcNAc...) (complex) asparagine; alternate) is linked at N947. An N-linked (GlcNAc...) (hybrid) asparagine; alternate glycan is attached at N947. Y992 is modified (iodotyrosine; alternate). Y992 bears the Diiodotyrosine; alternate mark. N1140 is a glycosylation site (N-linked (GlcNAc...) (complex) asparagine; alternate). An N-linked (GlcNAc...) (hybrid) asparagine; alternate glycan is attached at N1140. Residue Y1310 is modified to Iodotyrosine. Y1310 carries the thyroxine modification. N-linked (GlcNAc...) (high mannose) asparagine glycosylation is present at N1365. Intrachain disulfides connect C1441–C1461, C1464–C1475, C1478–C1492, C1495–C1512, C1516–C1525, C1545–C1567, C1605–C1629, C1609–C1615, C1641–C1664, C1726–C1751, C1730–C1736, C1735–C1836, and C1762–C1779. Type II repeat units follow at residues 1458–1471 (ALGCVKCPEGSYFQ), 1472–1488 (DEQCIPCPAGFYQEQAG), and 1489–1505 (SLACVPCPEGRTTVYAG). Position 1469 is an iodotyrosine; alternate (Y1469). Position 1469 is a diiodotyrosine; alternate (Y1469). The region spanning 1513-1567 (VTDCQKNEVGLQCDQDSQYRASQRDRTSGKAFCVDGEGRRLPWTEAEAPLVDAQC) is the Thyroglobulin type-1 11 domain. The Type IIIA repeat unit spans residues 1605 to 1725 (CLADCALDEA…GASLAEVHLF (121 aa)). A Type IIIB repeat occupies 1726-1893 (CLLACDHDSC…LFSLQQANLW (168 aa)). Residue N1776 is glycosylated (N-linked (GlcNAc...) (complex) asparagine; alternate). N-linked (GlcNAc...) (hybrid) asparagine; alternate glycosylation occurs at N1776. Residues 1827-1842 (MGSRSESMGCRRDTEP) show a composition bias toward basic and acidic residues. The interval 1827–1851 (MGSRSESMGCRRDTEPRPASPSETD) is disordered. An N-linked (GlcNAc...) (complex) asparagine; alternate glycan is attached at N1870. A glycan (N-linked (GlcNAc...) (hybrid) asparagine; alternate) is linked at N1870. Cystine bridges form between C1894-C1920, C1898-C1905, C1929-C1940, C1997-C2025, C2001-C2007, C2006-C2077, and C2036-C2049. Residues 1894–1996 (CLSRCAGEPS…DKSISSGFFE (103 aa)) form a Type IIIA repeat. One copy of the Type IIIB repeat lies at 1997–2130 (CERLCDMDPC…VGNFSAARDR (134 aa)). Residue N2014 is glycosylated (N-linked (GlcNAc...) (high mannose) asparagine). N-linked (GlcNAc...) (high mannose) asparagine glycosylation is present at N2123. Disulfide bonds link C2131–C2155, C2135–C2141, and C2164–C2173. The stretch at 2131 to 2188 (CLWECSRHQDCLVTTLQTQPGAVRCMFYADTQSCTHSLQAQNCRLLLHEEATYIYRKP) is one Type IIIA repeat. Y2185 carries the iodotyrosine modification. The segment at 2189 to 2769 (NIPLPGFGTS…PELASKTYSK (581 aa)) is cholinesterase-like (ChEL). Residue N2251 is glycosylated (N-linked (GlcNAc...) (complex) asparagine; alternate). N2251 carries an N-linked (GlcNAc...) (hybrid) asparagine; alternate glycan. An N-linked (GlcNAc...) (high mannose) asparagine glycan is attached at N2296. C2443 and C2454 are disulfide-bonded. Y2541 carries the post-translational modification Thyroxine. Iodotyrosine; alternate is present on Y2574. Position 2574 is a thyroxine; alternate (Y2574). A Triiodothyronine; alternate modification is found at Y2574. Y2574 is modified (diiodotyrosine; alternate). Residues Y2588 and Y2618 each carry the iodotyrosine modification. C2592 and C2716 form a disulfide bridge. Position 2698 is a diiodotyrosine (Y2698). The tract at residues 2730–2769 (ADETKDGPSADSEEEDQPAGSGLTEDLLGLPELASKTYSK) is disordered. At Y2767 the chain carries Iodotyrosine; alternate. Thyroxine; alternate is present on Y2767. Y2767 is modified (triiodothyronine; alternate). Y2767 carries the diiodotyrosine; alternate modification.

It belongs to the type-B carboxylesterase/lipase family. In terms of assembly, monomer. Homodimer (via ChEL region); occurs in the endoplasmic reticulum and is required for export to the Golgi apparatus. Homooligomer; disulfide-linked; stored in this form in the thyroid follicle lumen. Iodinated on tyrosine residues by TPO. There are 4 pairs of iodinated tyrosines used for coupling: acceptor Tyr-24 is coupled to donor Tyr-149 or Tyr-234, acceptor Tyr-2574 is coupled to donor Tyr-2541, acceptor Tyr-2767 in monomer 1 is coupled to donor Tyr-2767 in monomer 2 and acceptor Tyr-1310 in monomer 1 is coupled to donor Tyr-108 in monomer 2. Post-translationally, sulfated tyrosines are desulfated during iodination. In terms of processing, undergoes sequential proteolysis by cathepsins to release thyroxine (T4) and triiodothyronine (T3) hormones. In the thyroid follicle lumen, cross-linked TG (storage form) is solubilized by limited proteolysis mediated by cathepsins CTSB and/or CTSL. Partially cleaved TG is further processed by CTSK/cathepsin K and/or CTSL resulting in the release of T4. Following endocytosis, further processing occurs leading to the release of T3 and more T4 hormones. As to expression, specifically expressed in the thyroid gland.

Its subcellular location is the secreted. Acts as a substrate for the production of iodinated thyroid hormones thyroxine (T4) and triiodothyronine (T3). The synthesis of T3 and T4 involves iodination of selected tyrosine residues of TG/thyroglobulin followed by their oxidative coupling. Following TG re-internalization and lysosomal-mediated proteolysis, T3 and T4 are released from the polypeptide backbone leading to their secretion into the bloodstream. One dimer produces 7 thyroid hormone molecules. The chain is Thyroglobulin (TG) from Bos taurus (Bovine).